A 311-amino-acid polypeptide reads, in one-letter code: MPLLVEGRRVRLPQSAGDLVRAHPPLEERARLLRGQSVQQVGPQGLLYVQQRELAVTSPKDGSVCILGSDDATTCHIVVLRHTGNGATCLTHCDGTDTKAEVSLIMSSIKSFSDHTQRGRLEVHLVGGFSDDRQLSQKLTHQLLSEFDRQEDDIHLVTLCVTELNDREENENHFPIIYGIAVNVKTAEIYRASFPDRGPEEELRAARVLTGGPMISIYDAKTEQLRIGPYSWMPFPHVDFWLQQDDKQILENLSTSPLAEPPHFVEHIRSTLMFLKKYPSPTNTLFPGNKALLYKKNEDGLWKEISSGGET.

Monomer.

The protein resides in the cytoplasm. It carries out the reaction N-terminal L-asparaginyl-[protein] + H2O + H(+) = N-terminal L-aspartyl-[protein] + NH4(+). N-terminal asparagine deamidase that mediates deamidation of N-terminal asparagine residues to aspartate. Required for the ubiquitin-dependent turnover of intracellular proteins that initiate with Met-Asn. These proteins are acetylated on the retained initiator methionine and can subsequently be modified by the removal of N-acetyl methionine by acylaminoacid hydrolase (AAH). Conversion of the resulting N-terminal asparagine to aspartate by NTAN1/PNAD renders the protein susceptible to arginylation, polyubiquitination and degradation as specified by the N-end rule. This enzyme does not act on substrates with internal or C-terminal asparagines and does not act on glutamine residues in any position. This Sus scrofa (Pig) protein is Protein N-terminal asparagine amidohydrolase (NTAN1).